The following is a 422-amino-acid chain: CinA-like protein (422 aa).

This sequence belongs to the CinA family.

In Mycolicibacterium vanbaalenii (strain DSM 7251 / JCM 13017 / BCRC 16820 / KCTC 9966 / NRRL B-24157 / PYR-1) (Mycobacterium vanbaalenii), this protein is CinA-like protein.